A 343-amino-acid polypeptide reads, in one-letter code: uncharacterized protein (343 aa).

11 helical membrane-spanning segments follow: residues 13 to 33, 44 to 64, 71 to 91, 121 to 141, 148 to 168, 177 to 197, 203 to 223, 244 to 264, 269 to 289, 296 to 316, and 320 to 340; these read VILY…SMCG, LWGY…ATLD, MHPV…LFFI, ILLL…LTGL, NASL…YLIF, FLGI…GDFS, VAVT…LDTV, VGGF…ELPL, YALG…YIAI, MVGA…FIIL, and FSIM…ILYW. EamA domains follow at residues 55-192 and 216-340; these read IFFG…YLLT and FFWS…ILYW.

It belongs to the EamA transporter family.

It is found in the cell membrane. This is an uncharacterized protein from Methanothermobacter thermautotrophicus (strain ATCC 29096 / DSM 1053 / JCM 10044 / NBRC 100330 / Delta H) (Methanobacterium thermoautotrophicum).